The following is a 389-amino-acid chain: Methylthioribose-1-phosphate isomerase (389 aa).

Asp258 acts as the Proton donor in catalysis.

The protein belongs to the eIF-2B alpha/beta/delta subunits family. MtnA subfamily.

The protein resides in the cytoplasm. Its subcellular location is the nucleus. The catalysed reaction is 5-(methylsulfanyl)-alpha-D-ribose 1-phosphate = 5-(methylsulfanyl)-D-ribulose 1-phosphate. The protein operates within amino-acid biosynthesis; L-methionine biosynthesis via salvage pathway; L-methionine from S-methyl-5-thio-alpha-D-ribose 1-phosphate: step 1/6. Its function is as follows. Catalyzes the interconversion of methylthioribose-1-phosphate (MTR-1-P) into methylthioribulose-1-phosphate (MTRu-1-P). The polypeptide is Methylthioribose-1-phosphate isomerase (Chaetomium globosum (strain ATCC 6205 / CBS 148.51 / DSM 1962 / NBRC 6347 / NRRL 1970) (Soil fungus)).